We begin with the raw amino-acid sequence, 773 residues long: LON peptidase N-terminal domain and RING finger protein 1 (773 aa).

A disordered region spans residues 1–29 (MSSPAVARTSPGGSREMAPAPQGRGRFWE). The TPR 1 repeat unit spans residues 48 to 81 (WELLLRRGELLALGGHLKGALEAFAAALRRGAPA). The RING-type 1 zinc-finger motif lies at 123–159 (CLGCRGFLSEPVTVPCGHSYCRRCLRRELRARCRLCR). TPR repeat units lie at residues 212–244 (ARAA…EPSD), 246–278 (IVKI…LPDW), and 279–312 (PEVY…DEDF). A compositionally biased stretch (polar residues) spans 359-370 (EESQSLNEPSPK). The tract at residues 359-388 (EESQSLNEPSPKQSEEIPEVTSEPVKGSLN) is disordered. Ser431 carries the post-translational modification Phosphoserine. The RING-type 2 zinc-finger motif lies at 479–517 (CSLCMRLFFEPVTTPCGHSFCKNCLERCLDHAPYCPLCK). A Lon N-terminal domain is found at 558–768 (TAELSHLTKN…KIQHILTYFS (211 aa)).

This is LON peptidase N-terminal domain and RING finger protein 1 (LONRF1) from Homo sapiens (Human).